A 229-amino-acid chain; its full sequence is Small ribosomal subunit protein uS3 (229 aa).

The 69-residue stretch at 39 to 107 (VRQYLTEKLK…TAQINIAEIR (69 aa)) folds into the KH type-2 domain.

This sequence belongs to the universal ribosomal protein uS3 family. Part of the 30S ribosomal subunit. Forms a tight complex with proteins S10 and S14.

In terms of biological role, binds the lower part of the 30S subunit head. Binds mRNA in the 70S ribosome, positioning it for translation. The sequence is that of Small ribosomal subunit protein uS3 from Shewanella frigidimarina (strain NCIMB 400).